A 371-amino-acid chain; its full sequence is uncharacterized protein (371 aa).

Transmembrane regions (helical) follow at residues 9-29, 58-78, 98-118, 133-153, 159-179, 183-203, and 330-350; these read FTLD…VFLI, VLAF…FLAI, LIVA…SFIF, LAPF…VSVI, YDVN…ALAA, ISNF…IGDW, and IIEI…MVVV.

Belongs to the MscS (TC 1.A.23) family.

It localises to the cell membrane. Functionally, may play a role in resistance to osmotic downshock. This is an uncharacterized protein from Bacillus subtilis (strain 168).